A 434-amino-acid chain; its full sequence is Mitochondrial distribution and morphology protein 12 (434 aa).

Residues M1–V434 enclose the SMP-LTD domain. Residues Y70–E83 are compositionally biased toward acidic residues. Disordered stretches follow at residues Y70–P141 and T181–R277. Over residues S86–S97 the composition is skewed to basic and acidic residues. A compositionally biased stretch (polar residues) spans S215–S237.

This sequence belongs to the MDM12 family. In terms of assembly, component of the ER-mitochondria encounter structure (ERMES) or MDM complex, composed of MMM1, MDM10, MDM12 and MDM34. An MMM1 homodimer associates with one molecule of MDM12 on each side in a pairwise head-to-tail manner, and the SMP-LTD domains of MMM1 and MDM12 generate a continuous hydrophobic tunnel for phospholipid trafficking.

It localises to the mitochondrion outer membrane. The protein resides in the endoplasmic reticulum membrane. Functionally, component of the ERMES/MDM complex, which serves as a molecular tether to connect the endoplasmic reticulum (ER) and mitochondria. Components of this complex are involved in the control of mitochondrial shape and protein biogenesis, and function in nonvesicular lipid trafficking between the ER and mitochondria. MDM12 is required for the interaction of the ER-resident membrane protein MMM1 and the outer mitochondrial membrane-resident beta-barrel protein MDM10. The MDM12-MMM1 subcomplex functions in the major beta-barrel assembly pathway that is responsible for biogenesis of all mitochondrial outer membrane beta-barrel proteins, and acts in a late step after the SAM complex. The MDM10-MDM12-MMM1 subcomplex further acts in the TOM40-specific pathway after the action of the MDM12-MMM1 complex. Essential for establishing and maintaining the structure of mitochondria and maintenance of mtDNA nucleoids. The polypeptide is Mitochondrial distribution and morphology protein 12 (Ajellomyces dermatitidis (strain ER-3 / ATCC MYA-2586) (Blastomyces dermatitidis)).